The following is a 428-amino-acid chain: Glutamate--tRNA ligase 2 (428 aa).

Residues 6–16 (PSPTGDMRTEQ) carry the 'HIGH' region motif.

It belongs to the class-I aminoacyl-tRNA synthetase family. Glutamate--tRNA ligase type 1 subfamily. In terms of assembly, monomer.

It is found in the cytoplasm. The catalysed reaction is tRNA(Glu) + L-glutamate + ATP = L-glutamyl-tRNA(Glu) + AMP + diphosphate. In terms of biological role, catalyzes the attachment of glutamate to tRNA(Glu) in a two-step reaction: glutamate is first activated by ATP to form Glu-AMP and then transferred to the acceptor end of tRNA(Glu). The protein is Glutamate--tRNA ligase 2 of Sulfurovum sp. (strain NBC37-1).